The following is a 437-amino-acid chain: MQVSVENTSALERRMTIAVPAERVENEVNKRLQQTAKRAKVAGFRPGKVPMSVIRQRFEADARQEAFGDLVQASFYEAIVEQKLNPAGAPAVEPKSFEKGKDLEFVAIFEVFPEFAVAGLESISVERLSAEVTDADLDNMLEVLRKQNVRFEAVERAAEKDDQVNIDFVGKIDGEAFAGGSAKGTQLVLGSGRMIPGFEDGLVGAKAGEERVVNVTFPEDYQNLDLAGKAAEFTITVNSVSAPQLPELNEEFFAQFGIKESTLEGFRAEVRKNMERELRQAIKTKVKNQVMDGLLAANPIEVPKALLENEVNRLRVQAVQQFGGNIKPEQLPAELFEEQAKRRVVLGLIVAEVVKQFELKPDEGKVREMIEEMASAYQEPEQVIAWYLKNDQQMNEVRSVVLEEQVVDTVLQKATVTDKSVSYEEAVKPAQAPAEAE.

The region spanning 161–246 (DDQVNIDFVG…VNSVSAPQLP (86 aa)) is the PPIase FKBP-type domain.

It belongs to the FKBP-type PPIase family. Tig subfamily.

It localises to the cytoplasm. The enzyme catalyses [protein]-peptidylproline (omega=180) = [protein]-peptidylproline (omega=0). Its function is as follows. Involved in protein export. Acts as a chaperone by maintaining the newly synthesized protein in an open conformation. Functions as a peptidyl-prolyl cis-trans isomerase. This is Trigger factor from Pseudomonas putida (strain W619).